Consider the following 460-residue polypeptide: Serine incorporator 5 (460 aa).

Over 1-36 (MCTPCCVSQLACCCGSAACSLCCGCCPKIKQSTSTR) the chain is Extracellular. The helical transmembrane segment at 37–57 (FMYALFFMLVTVTCVIMMSPT) threads the bilayer. Residues 58-89 (VEMAMREHIPFYSQMCQQLNAGENCSTLVGYS) are Cytoplasmic-facing. The chain crosses the membrane as a helical span at residues 90 to 110 (AVYKVCFGMACFFFFFAVFTI). Residues 111–124 (RVQNSTGCRAAVHN) lie on the Extracellular side of the membrane. Asparagine 114 carries an N-linked (GlcNAc...) asparagine glycan. Residues 125–145 (GFWFFKFVALLACCAGGFFLP) traverse the membrane as a helical segment. At 146–156 (NQDQFLEVWRY) the chain is on the cytoplasmic side. The chain crosses the membrane as a helical span at residues 157–177 (VGAAGGFLFIIIQLMLLVQFA). Over 178-197 (HRWNQNWSSGATYNKLWYAA) the chain is Extracellular. Asparagine 183 carries N-linked (GlcNAc...) asparagine glycosylation. The helical transmembrane segment at 198–218 (LALVTLVLFSVAVGGMVFMFM) threads the bilayer. At 219-230 (YYTHPEACFLNK) the chain is on the cytoplasmic side. A helical membrane pass occupies residues 231-251 (IFLGVNGGLCFIVSLLAISPC). The Extracellular portion of the chain corresponds to 252 to 259 (IQTFQPTS). A helical membrane pass occupies residues 260-280 (GLLQPAVITLYVMYLTFSALA). The Cytoplasmic portion of the chain corresponds to 281–311 (SKPIEMVEDEIKGNITVCVFPFKSGLKSDTN). The helical transmembrane segment at 312-332 (IVTGVGTAILFCCILYSCLIS) threads the bilayer. Topologically, residues 333 to 391 (TTKRSSAALQVYRNDMPENERARCCFCWVDDTEDYDDEKTSGGQNVKYDERDGTVYSYC) are extracellular. Residues 392 to 412 (FFHFVFFLGSLYVMMTVTNWF) traverse the membrane as a helical segment. Residues 413-433 (HYDNAKIERLLEGSWSVFWIK) are Cytoplasmic-facing. A helical membrane pass occupies residues 434–454 (MASSWVCLFFYMWTLVVPMLF). Over 455-460 (PQRFQA) the chain is Extracellular.

Belongs to the TDE1 family.

The protein localises to the cell membrane. It carries out the reaction a 1,2-diacyl-sn-glycero-3-phospho-L-serine(in) = a 1,2-diacyl-sn-glycero-3-phospho-L-serine(out). It catalyses the reaction a 1,2-diacyl-sn-glycero-3-phosphocholine(in) = a 1,2-diacyl-sn-glycero-3-phosphocholine(out). The catalysed reaction is a 1,2-diacyl-sn-glycero-3-phosphoethanolamine(in) = a 1,2-diacyl-sn-glycero-3-phosphoethanolamine(out). Its function is as follows. Restriction factor required to restrict infectivity of gammaretroviruses: acts by inhibiting an early step of viral infection. Impairs the penetration of the viral particle into the cytoplasm. Non-ATP-dependent, non-specific lipid transporter for phosphatidylserine, phosphatidylcholine, and phosphatidylethanolamine. Functions as a scramblase that flips lipids in both directions across the membrane. Phospholipid scrambling results in gammaretroviral surface exposure of phosphatidylserine and loss of membrane asymmetry, which leads to loss of infectivity. Enhances the incorporation of serine into phosphatidylserine and sphingolipids. The sequence is that of Serine incorporator 5 (serinc5) from Danio rerio (Zebrafish).